Reading from the N-terminus, the 173-residue chain is NADH-ubiquinone oxidoreductase chain 6 (173 aa).

5 consecutive transmembrane segments (helical) span residues 1 to 21 (MTYF…AVAS), 27 to 47 (YGVV…VNLG), 48 to 68 (VSFV…VVFV), 87 to 107 (VMGY…LGGF), and 139 to 159 (YGVG…FVVL).

It belongs to the complex I subunit 6 family.

Its subcellular location is the mitochondrion membrane. It catalyses the reaction a ubiquinone + NADH + 5 H(+)(in) = a ubiquinol + NAD(+) + 4 H(+)(out). Functionally, core subunit of the mitochondrial membrane respiratory chain NADH dehydrogenase (Complex I) that is believed to belong to the minimal assembly required for catalysis. Complex I functions in the transfer of electrons from NADH to the respiratory chain. The immediate electron acceptor for the enzyme is believed to be ubiquinone. This chain is NADH-ubiquinone oxidoreductase chain 6 (MT-ND6), found in Coturnix japonica (Japanese quail).